The chain runs to 156 residues: MTIHIDFLDETNEVTAEQIETIERLLAEAAALENVPDGAEVSVTFVDNERIRAMNRDYRGKDAPTDVLSFALEEEGEEEVHIVGADMPPVLGDIVISIPKAKEQAAAYGHSFMRELGFLAVHGFLHLLGYDHGTEEEERVMFAKQEDILARFGLTR.

The Zn(2+) site is built by H122, H126, and H132.

The protein belongs to the endoribonuclease YbeY family. Zn(2+) is required as a cofactor.

Its subcellular location is the cytoplasm. Its function is as follows. Single strand-specific metallo-endoribonuclease involved in late-stage 70S ribosome quality control and in maturation of the 3' terminus of the 16S rRNA. The chain is Endoribonuclease YbeY from Geobacillus kaustophilus (strain HTA426).